The following is a 518-amino-acid chain: ATP synthase F(1) complex catalytic subunit beta, mitochondrial (518 aa).

G199, V200, G201, K202, T203, and V204 together coordinate ADP. G199 contacts ATP. G199, V200, G201, K202, and T203 together coordinate phosphate. Residues G201, K202, T203, and V204 each contribute to the ATP site. Residue T203 participates in Mg(2+) binding. Mg(2+) is bound at residue E228. ATP is bound at residue R229.

The protein belongs to the ATPase alpha/beta chains family. In terms of assembly, homotrimer. Component of the ATP synthase complex composed at least of ATP5F1A/subunit alpha, ATP5F1B/subunit beta, ATP5MC1/subunit c (homooctomer), MT-ATP6/subunit a, MT-ATP8/subunit 8, ATP5ME/subunit e, ATP5MF/subunit f, ATP5MG/subunit g, ATP5MK/subunit k, ATP5MJ/subunit j, ATP5F1C/subunit gamma, ATP5F1D/subunit delta, ATP5F1E/subunit epsilon, ATP5PF/subunit F6, ATP5PB/subunit b, ATP5PD/subunit d, ATP5PO/subunit OSCP. ATP synthase complex consists of a soluble F(1) head domain (subunits alpha(3) and beta(3)) - the catalytic core - and a membrane F(0) domain - the membrane proton channel (subunits c, a, 8, e, f, g, k and j). These two domains are linked by a central stalk (subunits gamma, delta, and epsilon) rotating inside the F1 region and a stationary peripheral stalk (subunits F6, b, d, and OSCP).

The protein resides in the mitochondrion inner membrane. The enzyme catalyses ATP + H2O + 4 H(+)(in) = ADP + phosphate + 5 H(+)(out). In terms of biological role, catalytic subunit beta, of the mitochondrial membrane ATP synthase complex (F(1)F(0) ATP synthase or Complex V) that produces ATP from ADP in the presence of a proton gradient across the membrane which is generated by electron transport complexes of the respiratory chain. ATP synthase complex consist of a soluble F(1) head domain - the catalytic core - and a membrane F(1) domain - the membrane proton channel. These two domains are linked by a central stalk rotating inside the F(1) region and a stationary peripheral stalk. During catalysis, ATP synthesis in the catalytic domain of F(1) is coupled via a rotary mechanism of the central stalk subunits to proton translocation. In vivo, can only synthesize ATP although its ATP hydrolase activity can be activated artificially in vitro. With the subunit alpha (ATP5F1A), forms the catalytic core in the F(1) domain. The polypeptide is ATP synthase F(1) complex catalytic subunit beta, mitochondrial (Cyprinus carpio (Common carp)).